Reading from the N-terminus, the 345-residue chain is Phosphoribosylformylglycinamidine cyclo-ligase (345 aa).

It belongs to the AIR synthase family.

The protein resides in the cytoplasm. It carries out the reaction 2-formamido-N(1)-(5-O-phospho-beta-D-ribosyl)acetamidine + ATP = 5-amino-1-(5-phospho-beta-D-ribosyl)imidazole + ADP + phosphate + H(+). The protein operates within purine metabolism; IMP biosynthesis via de novo pathway; 5-amino-1-(5-phospho-D-ribosyl)imidazole from N(2)-formyl-N(1)-(5-phospho-D-ribosyl)glycinamide: step 2/2. This chain is Phosphoribosylformylglycinamidine cyclo-ligase, found in Aeromonas salmonicida (strain A449).